A 103-amino-acid chain; its full sequence is Pyrimidine/purine nucleoside phosphorylase (103 aa).

Belongs to the nucleoside phosphorylase PpnP family.

The enzyme catalyses a purine D-ribonucleoside + phosphate = a purine nucleobase + alpha-D-ribose 1-phosphate. It catalyses the reaction adenosine + phosphate = alpha-D-ribose 1-phosphate + adenine. The catalysed reaction is cytidine + phosphate = cytosine + alpha-D-ribose 1-phosphate. It carries out the reaction guanosine + phosphate = alpha-D-ribose 1-phosphate + guanine. The enzyme catalyses inosine + phosphate = alpha-D-ribose 1-phosphate + hypoxanthine. It catalyses the reaction thymidine + phosphate = 2-deoxy-alpha-D-ribose 1-phosphate + thymine. The catalysed reaction is uridine + phosphate = alpha-D-ribose 1-phosphate + uracil. It carries out the reaction xanthosine + phosphate = alpha-D-ribose 1-phosphate + xanthine. Its function is as follows. Catalyzes the phosphorolysis of diverse nucleosides, yielding D-ribose 1-phosphate and the respective free bases. Can use uridine, adenosine, guanosine, cytidine, thymidine, inosine and xanthosine as substrates. Also catalyzes the reverse reactions. The polypeptide is Pyrimidine/purine nucleoside phosphorylase (Chlorobium chlorochromatii (strain CaD3)).